Consider the following 364-residue polypeptide: tRNA-specific 2-thiouridylase MnmA (364 aa).

ATP-binding positions include 12–19 and Met-38; that span reads GMSGGVDS. The tract at residues 98 to 100 is interaction with target base in tRNA; the sequence is NPD. The Nucleophile role is filled by Cys-103. Cys-103 and Cys-199 are joined by a disulfide. Residue Gly-127 coordinates ATP. Positions 149–151 are interaction with tRNA; sequence KDQ. The Cysteine persulfide intermediate role is filled by Cys-199. Positions 307–308 are interaction with tRNA; the sequence is RY.

Belongs to the MnmA/TRMU family.

The protein localises to the cytoplasm. The catalysed reaction is S-sulfanyl-L-cysteinyl-[protein] + uridine(34) in tRNA + AH2 + ATP = 2-thiouridine(34) in tRNA + L-cysteinyl-[protein] + A + AMP + diphosphate + H(+). In terms of biological role, catalyzes the 2-thiolation of uridine at the wobble position (U34) of tRNA, leading to the formation of s(2)U34. This chain is tRNA-specific 2-thiouridylase MnmA, found in Shouchella clausii (strain KSM-K16) (Alkalihalobacillus clausii).